A 247-amino-acid chain; its full sequence is TLC domain-containing protein 1 (247 aa).

An N-terminal signal peptide occupies residues 1 to 27; that stretch reads MPLLLHPAWPLLLGATLTFRALRRVLC. Residues 28–46 lie on the Extracellular side of the membrane; that stretch reads RLPLPAHVQTDPLRTWRWH. A TLC domain is found at 40–234; sequence LRTWRWHNLL…LLRSDFCPER (195 aa). A helical transmembrane segment spans residues 47-67; the sequence is NLLVSFTHSIVSGIWALLCIW. The Cytoplasmic segment spans residues 68–83; that stretch reads QTPEMLVEIETAWSVC. The chain crosses the membrane as a helical span at residues 84 to 104; that stretch reads GYLLVCFSAGYFIHDTVDIVV. At 105–123 the chain is on the extracellular side; it reads SRQTRASWEYLVHHVMAMG. The segment at residues 124 to 144 is an intramembrane region (helical); it reads AFFSGIFWKRFVGGGVLTLLV. Topologically, residues 145 to 173 are extracellular; that stretch reads EVSNIFLTLRMMMKINNAQDILLYKVNKY. Residues 174-194 traverse the membrane as a helical segment; the sequence is VNLVMYFLFRLAPQAYLTKFF. Residues 195 to 201 are Cytoplasmic-facing; sequence LQYAGQR. The chain crosses the membrane as a helical span at residues 202–222; that stretch reads TLGTFLLSILLMLDVMILIYF. At 223 to 247 the chain is on the extracellular side; the sequence is SRLLRSDFCPERAPSRQQKDKFLTE.

It localises to the cell membrane. Functionally, regulates the composition and fluidity of the plasma membrane. Inhibits the incorporation of membrane-fluidizing phospholipids containing omega-3 long-chain polyunsaturated fatty acids (LCPUFA) and thereby promotes membrane rigidity. Does not appear to have any effect on LCPUFA synthesis. In Rattus norvegicus (Rat), this protein is TLC domain-containing protein 1 (Tlcd1).